The chain runs to 502 residues: Dipeptide and tripeptide permease A (502 aa).

Over 1-35 (MSTANNKPTDESVSLNAFKQPKAFYLIFSIELWER) the chain is Cytoplasmic. A helical membrane pass occupies residues 36–56 (FGFYGLQGIMAVYLVKQLGMS). At 57–60 (EADS) the chain is on the periplasmic side. Residues 61 to 81 (ITLFSSFSALVYGLVAVGGWL) traverse the membrane as a helical segment. At 82–90 (GDKVLGTKR) the chain is on the cytoplasmic side. The chain crosses the membrane as a helical span at residues 91 to 111 (VIMLGAVVLAIGYGLVAWSGH). Position 112 (aspartate 112) is a topological domain, periplasmic. Residues 113 to 133 (AAVVYMGMATIAVGNGLFKAN) traverse the membrane as a helical segment. Residues 134–154 (PSSLLSTCYNKDDPRLDGAFT) lie on the Cytoplasmic side of the membrane. A helical membrane pass occupies residues 155–175 (MYYMSINIGSFFSMLATPWLA). At 176–179 (AKFG) the chain is on the periplasmic side. Residues 180 to 200 (WSVAFALSFVGMLITVVNFLF) form a helical membrane-spanning segment. Over 201 to 218 (CRSWVKNYGSKPDFEPVH) the chain is Cytoplasmic. A helical transmembrane segment spans residues 219–239 (IGKLLATIVGVVILATIATWL). The Periplasmic segment spans residues 240-247 (LHNQGVAR). The helical transmembrane segment at 248 to 268 (AVLGVVALGIICIFAKEAFAM) threads the bilayer. At 269 to 275 (QGAARRK) the chain is on the cytoplasmic side. A helical membrane pass occupies residues 276 to 296 (MIVAFILMLQAVVFFVLYSQM). The Periplasmic portion of the chain corresponds to 297 to 321 (PTSLNFFAIRNVEHSILSIAFEPEQ). A helical membrane pass occupies residues 322 to 342 (FQALNPFWIMIGSPILAAIYN). The Cytoplasmic portion of the chain corresponds to 343–353 (KMGDRLPMPHK). Residues 354-374 (FAIGMVLCSGAFLVLPLGTKF) traverse the membrane as a helical segment. Residues 375-384 (ATDAGIVSVN) are Periplasmic-facing. Residues 385-405 (WLILSYALQSIGELMISGLGL) traverse the membrane as a helical segment. Topologically, residues 406 to 415 (AMVAQLVPQR) are cytoplasmic. Residues 416–436 (LMGFIMGSWFLTTAGAALIAG) form a helical membrane-spanning segment. The Periplasmic portion of the chain corresponds to 437–460 (KIANLMAVPENVTDPLVSLEVYGR). The helical transmembrane segment at 461–481 (VFMQIGIATAVIAVLMLLTAP) threads the bilayer. Topologically, residues 482–502 (KLNRMTLEDDKAAKATDTATA) are cytoplasmic.

It belongs to the major facilitator superfamily. Proton-dependent oligopeptide transporter (POT/PTR) (TC 2.A.17) family. DtpA subfamily.

The protein resides in the cell inner membrane. Functionally, proton-dependent permease that transports di- and tripeptides. This chain is Dipeptide and tripeptide permease A, found in Enterobacter sp. (strain 638).